The primary structure comprises 508 residues: Photosystem II CP47 reaction center protein (508 aa).

6 consecutive transmembrane segments (helical) span residues 21 to 36 (SVHI…WAGS), 101 to 115 (IVFS…IWHW), 140 to 156 (GIHL…FGAF), 203 to 218 (IAAG…FHLS), 237 to 252 (VLSS…AFVV), and 457 to 472 (SFAL…HGSR).

This sequence belongs to the PsbB/PsbC family. PsbB subfamily. PSII is composed of 1 copy each of membrane proteins PsbA, PsbB, PsbC, PsbD, PsbE, PsbF, PsbH, PsbI, PsbJ, PsbK, PsbL, PsbM, PsbT, PsbX, PsbY, PsbZ, Psb30/Ycf12, at least 3 peripheral proteins of the oxygen-evolving complex and a large number of cofactors. It forms dimeric complexes. Binds multiple chlorophylls. PSII binds additional chlorophylls, carotenoids and specific lipids. is required as a cofactor.

Its subcellular location is the plastid. The protein resides in the chloroplast thylakoid membrane. One of the components of the core complex of photosystem II (PSII). It binds chlorophyll and helps catalyze the primary light-induced photochemical processes of PSII. PSII is a light-driven water:plastoquinone oxidoreductase, using light energy to abstract electrons from H(2)O, generating O(2) and a proton gradient subsequently used for ATP formation. This is Photosystem II CP47 reaction center protein from Capsella bursa-pastoris (Shepherd's purse).